We begin with the raw amino-acid sequence, 500 residues long: Probable malate:quinone oxidoreductase (500 aa).

It belongs to the MQO family. FAD serves as cofactor.

The catalysed reaction is (S)-malate + a quinone = a quinol + oxaloacetate. The protein operates within carbohydrate metabolism; tricarboxylic acid cycle; oxaloacetate from (S)-malate (quinone route): step 1/1. This chain is Probable malate:quinone oxidoreductase, found in Bacillus cereus (strain G9842).